Consider the following 458-residue polypeptide: Exodeoxyribonuclease 7 large subunit (458 aa).

It belongs to the XseA family. Heterooligomer composed of large and small subunits.

It is found in the cytoplasm. The enzyme catalyses Exonucleolytic cleavage in either 5'- to 3'- or 3'- to 5'-direction to yield nucleoside 5'-phosphates.. Functionally, bidirectionally degrades single-stranded DNA into large acid-insoluble oligonucleotides, which are then degraded further into small acid-soluble oligonucleotides. This Escherichia coli O6:H1 (strain CFT073 / ATCC 700928 / UPEC) protein is Exodeoxyribonuclease 7 large subunit.